Reading from the N-terminus, the 187-residue chain is MATTSDLRTNMIIRHNGQLHRVMEFYHHAPGNWRAMVIMKLKNIETGKTIEERVRAGSEIEIVRVEKRPMQFLYREGDIYHFMDTETFEQIEVAEDLIGEPAKFLKENEMADILFYDDNKILGVEPPLFVTLQVTEASVAVRGDTATNVNKQVTLETGAVISVPAFVNQGDYVRVDTRTGEYIERIK.

This sequence belongs to the elongation factor P family.

It localises to the cytoplasm. It functions in the pathway protein biosynthesis; polypeptide chain elongation. Involved in peptide bond synthesis. Stimulates efficient translation and peptide-bond synthesis on native or reconstituted 70S ribosomes in vitro. Probably functions indirectly by altering the affinity of the ribosome for aminoacyl-tRNA, thus increasing their reactivity as acceptors for peptidyl transferase. This Roseiflexus castenholzii (strain DSM 13941 / HLO8) protein is Elongation factor P.